We begin with the raw amino-acid sequence, 1024 residues long: E3 ISG15--protein ligase HERC5 (1024 aa).

Positions 1-13 are enriched in basic residues; it reads MERRSRRKSRRNG. The interval 1–28 is disordered; that stretch reads MERRSRRKSRRNGRSTAGKAAATQPAKS. 5 RCC1 repeats span residues 96 to 155, 156 to 208, 209 to 260, 262 to 312, and 314 to 364; these read NMKI…ALSK, GGEL…ALSM, SGNI…LLTQ, GLLF…AYVS, and LGKV…LIMI. The 323-residue stretch at 702-1024 folds into the HECT domain; it reads ENEDLRKELW…EAINNNRGFG (323 aa). Catalysis depends on C994, which acts as the Glycyl thioester intermediate.

As to quaternary structure, (Microbial infection) Interacts with human cytomegalovirus protein UL26; this interaction inhibits global protein ISGylation. In terms of assembly, (Microbial infection) Interacts with Kaposi's sarcoma-associated herpesvirus protein v-IRF1; this interaction inhibits global protein ISGylation. Binds to CCNA1, CCNB1, CCND1 and CCNE1. Interacts with UBE2L6. Interacts with IRF3, this interaction is marginal in resting cells but enhanced upon viral infection. Interacts with influenza A virus NS1. ISGylated. Expressed in testis and to a lesser degree in brain, ovary and placenta. Found in most tissues at low levels.

It localises to the cytoplasm. The protein localises to the perinuclear region. Its function is as follows. Major E3 ligase for ISG15 conjugation. Acts as a positive regulator of innate antiviral response in cells induced by interferon. Functions as part of the ISGylation machinery that recognizes target proteins in a broad and relatively non-specific manner. Catalyzes ISGylation of IRF3 which results in sustained activation, it attenuates IRF3-PIN1 interaction, which antagonizes IRF3 ubiquitination and degradation, and boosts the antiviral response. Mediates ISGylation of the phosphatase PTEN leading to its degradation, thus alleviating its suppression of the PI3K-AKT signaling pathway and promoting the production of cytokines that facilitate bacterial clearance. Interferes with the function of key viral structural proteins such as ebolavirus structural protein VP40 or HIV-1 protein GAG. Catalyzes ISGylation of influenza A viral NS1 which attenuates virulence; ISGylated NS1 fails to form homodimers and thus to interact with its RNA targets. Catalyzes ISGylation of papillomavirus type 16 L1 protein which results in dominant-negative effect on virus infectivity. Physically associated with polyribosomes, broadly modifies newly synthesized proteins in a cotranslational manner. In an interferon-stimulated cell, newly translated viral proteins are primary targets of ISG15. Promotes parkin/PRKN ubiquitin E3 ligase activity by suppressing the intramolecular interaction that maintains its autoinhibited conformation. (Microbial infection) Functions as an E3 ligase for ISGylation of hepatitis B virus protein X leading to enhanced viral replication due to increased interferon resistance. In Homo sapiens (Human), this protein is E3 ISG15--protein ligase HERC5 (HERC5).